The primary structure comprises 292 residues: tRNA (guanine-N(1)-)-methyltransferase (292 aa).

Residues Gly151 and 175–180 each bind S-adenosyl-L-methionine; that span reads IGDYVL.

This sequence belongs to the RNA methyltransferase TrmD family. In terms of assembly, homodimer.

Its subcellular location is the cytoplasm. It catalyses the reaction guanosine(37) in tRNA + S-adenosyl-L-methionine = N(1)-methylguanosine(37) in tRNA + S-adenosyl-L-homocysteine + H(+). In terms of biological role, specifically methylates guanosine-37 in various tRNAs. This chain is tRNA (guanine-N(1)-)-methyltransferase, found in Corynebacterium diphtheriae (strain ATCC 700971 / NCTC 13129 / Biotype gravis).